A 1024-amino-acid chain; its full sequence is MDLAKFLCWIVLLLGISLVESRYMVYNTSHTIVPGKLNVHVVPHSHDDVGWLKTVDQYYVGSNNSIQVACVQNVLDSIVPALLADKNRKFIYVEQAFFQRWWNEQSEEIKRIVKELIHSGQLELINGGMCMHDEAAPHYIDMIDQTTLGHRFIIREFNVTPRIGWQIDPFGHSAVQAYLLGAEVGFDSVFFGRIDYQDREKRYKEKTLEVIWRGSKSLGSSSQIFAGAFPTNYEPPPGGFYYEITDDSPVVQDDPDLFDYNVQERVNAFVAAALDQANITRINHIMFTMGTDFRYQYAHTWYRQMDKLIHYVNLDGRVNAFYSTPSIYTDAKHAANEAWPLKTEDYFPYADRINAYWTGYFTSRPALKRYVRVMSAYYLAARQLEFFKGRSQKGPNTDSLADALAIAQHHDAVSGTSKQHVANDYAKRLAIGYVEAESVVATSLAHLTKVDPTLNPTFQQCLLLNISYCPSSEVNLSDGKSLIVLAYNPLGWKRVDIVRLPVVGGDVSVHDSEGHEVESQLVPFTDEYVALRKYHVEAYLGQSPTQVPKYWLVFSVTVPPLGFTTYTISTAKKTDGYSSKSYVSNILKGEQSIINIGHGHLKLSFSTDQGTAINYVNGRTSMTEPVKQTFSYYSAYNGSNDKEPLIPQNSGAYVFRPNGTFPINPEGQVPLTVIHGPLVDEVHQQINPWISQITRVYKGKEHVEVEFIVGNIPIDDGIGKEVVTQISSSLKSNKTFYTDSSGRDYIKRIRDYRSDWKLDVNQPIAGNYYPINHGIYLQDSKKEFSVMVDRAFGGSSIVDGQVELMLHRRLLLDDSRGVAENLNETVCVQDKCTGLTIQGKYYYRIDPYGEGAKWRRTFGQEIYSPLLLAFAQQDDGKPMSFGAASFSGIDPSYSLPDNVALLTLQELDDGNVLLRLAHLYEVEEDKELSGVASVELKKLFPGKKIGKLTEMSLSANQERSTMEKKRLVWKVEGEGSYGEEKKAKRGREIDPRKLEMELYPMEIRTVLIHLELPSSHSRINRFDA.

The first 21 residues, 1–21 (MDLAKFLCWIVLLLGISLVES), serve as a signal peptide directing secretion. Asn27 is a glycosylation site (N-linked (GlcNAc...) asparagine). Residues His46 and Asp48 each coordinate Zn(2+). Residue Asn63 is glycosylated (N-linked (GlcNAc...) asparagine). Residue Asp168 coordinates Zn(2+). N-linked (GlcNAc...) asparagine glycosylation is present at Asn278. Zn(2+) is bound at residue His410. A disulfide bond links Cys461 and Cys469. Asn465, Asn475, Asn637, Asn658, Asn733, and Asn823 each carry an N-linked (GlcNAc...) asparagine glycan. A disulfide bridge connects residues Cys827 and Cys832.

This sequence belongs to the glycosyl hydrolase 38 family. In terms of assembly, homodimer. Requires Zn(2+) as cofactor.

The catalysed reaction is Hydrolysis of terminal, non-reducing alpha-D-mannose residues in alpha-D-mannosides.. In terms of biological role, liberates mannose from p-nitrophenyl-alpha-D-mannoside in vitro. The polypeptide is Probable alpha-mannosidase At5g13980 (Arabidopsis thaliana (Mouse-ear cress)).